The sequence spans 229 residues: Large ribosomal subunit protein uL1 (229 aa).

It belongs to the universal ribosomal protein uL1 family. Part of the 50S ribosomal subunit.

Its function is as follows. Binds directly to 23S rRNA. The L1 stalk is quite mobile in the ribosome, and is involved in E site tRNA release. Functionally, protein L1 is also a translational repressor protein, it controls the translation of the L11 operon by binding to its mRNA. The protein is Large ribosomal subunit protein uL1 of Flavobacterium psychrophilum (strain ATCC 49511 / DSM 21280 / CIP 103535 / JIP02/86).